A 279-amino-acid polypeptide reads, in one-letter code: Phosphatidylglycerol--prolipoprotein diacylglyceryl transferase (279 aa).

4 consecutive transmembrane segments (helical) span residues 4-24 (IGPL…FLGY), 44-64 (VVFW…VLTS), 76-96 (LYIW…GLTF), and 104-124 (GYPL…GIVA). R126 contributes to the a 1,2-diacyl-sn-glycero-3-phospho-(1'-sn-glycerol) binding site. 3 helical membrane-spanning segments follow: residues 182 to 202 (LTQV…LYWL), 206 to 226 (PFYG…RSVL), and 245 to 265 (LGIG…LLSL).

The protein belongs to the Lgt family.

It is found in the cell inner membrane. The catalysed reaction is L-cysteinyl-[prolipoprotein] + a 1,2-diacyl-sn-glycero-3-phospho-(1'-sn-glycerol) = an S-1,2-diacyl-sn-glyceryl-L-cysteinyl-[prolipoprotein] + sn-glycerol 1-phosphate + H(+). Its pathway is protein modification; lipoprotein biosynthesis (diacylglyceryl transfer). Catalyzes the transfer of the diacylglyceryl group from phosphatidylglycerol to the sulfhydryl group of the N-terminal cysteine of a prolipoprotein, the first step in the formation of mature lipoproteins. The protein is Phosphatidylglycerol--prolipoprotein diacylglyceryl transferase of Thermus thermophilus (strain ATCC 27634 / DSM 579 / HB8).